A 518-amino-acid chain; its full sequence is Cytochrome P450 709B3 (518 aa).

A helical transmembrane segment spans residues 3 to 23 (LISTINLLTIVLLLFVVSKIW). Residue C465 participates in heme binding.

This sequence belongs to the cytochrome P450 family. Heme serves as cofactor. As to expression, highly expressed in rosette leaves and siliques, and at lower levels in flowers.

The protein localises to the membrane. In terms of biological role, plays a role in abscisic acid (ABA) and salt stress response. May regulate the salt stress response independently of well-characterized pathways. Does not function as cytokinin hydroxylase in yeast heterologous system. This is Cytochrome P450 709B3 from Arabidopsis thaliana (Mouse-ear cress).